Here is a 194-residue protein sequence, read N- to C-terminus: Large ribosomal subunit protein bL9 (194 aa).

Over residues Arg156–Gln167 the composition is skewed to basic and acidic residues. Residues Arg156–Gln194 form a disordered region. A compositionally biased stretch (acidic residues) spans Phe181–Gln194.

The protein belongs to the bacterial ribosomal protein bL9 family.

Its function is as follows. Binds to the 23S rRNA. This is Large ribosomal subunit protein bL9 from Rhodopseudomonas palustris (strain BisB5).